We begin with the raw amino-acid sequence, 187 residues long: MTTAEKTLPRLKQRYREEIRESLQQQFGYANVMQIPGVVKVVVNMGVGDAARDAKLINGAVNDLALITGQKPEIRRARKSIAQFKLREGMPIGARVTLRGDRMWEFLDRLVAIALPRIRDFRGLNPKQFDGTGNYTFGLTEQSMFHEIDVDSIDRPRGMDITVVTSATTDDEGRALLRALGFPFKEN.

It belongs to the universal ribosomal protein uL5 family. As to quaternary structure, part of the 50S ribosomal subunit; part of the 5S rRNA/L5/L18/L25 subcomplex. Contacts the 5S rRNA and the P site tRNA. Forms a bridge to the 30S subunit in the 70S ribosome.

This is one of the proteins that bind and probably mediate the attachment of the 5S RNA into the large ribosomal subunit, where it forms part of the central protuberance. In the 70S ribosome it contacts protein S13 of the 30S subunit (bridge B1b), connecting the 2 subunits; this bridge is implicated in subunit movement. Contacts the P site tRNA; the 5S rRNA and some of its associated proteins might help stabilize positioning of ribosome-bound tRNAs. The polypeptide is Large ribosomal subunit protein uL5 (Mycobacterium sp. (strain JLS)).